The following is a 237-amino-acid chain: Ribonuclease PH (237 aa).

Residues R86 and 124–126 (GTR) contribute to the phosphate site.

It belongs to the RNase PH family. As to quaternary structure, homohexameric ring arranged as a trimer of dimers.

It catalyses the reaction tRNA(n+1) + phosphate = tRNA(n) + a ribonucleoside 5'-diphosphate. Phosphorolytic 3'-5' exoribonuclease that plays an important role in tRNA 3'-end maturation. Removes nucleotide residues following the 3'-CCA terminus of tRNAs; can also add nucleotides to the ends of RNA molecules by using nucleoside diphosphates as substrates, but this may not be physiologically important. Probably plays a role in initiation of 16S rRNA degradation (leading to ribosome degradation) during starvation. This Methylocella silvestris (strain DSM 15510 / CIP 108128 / LMG 27833 / NCIMB 13906 / BL2) protein is Ribonuclease PH.